Here is a 220-residue protein sequence, read N- to C-terminus: Ribose-5-phosphate isomerase A (220 aa).

Substrate is bound by residues 28–31 (TGST), 81–84 (DGAD), and 94–97 (KGGG). Glu-103 functions as the Proton acceptor in the catalytic mechanism. Substrate is bound at residue Lys-121.

It belongs to the ribose 5-phosphate isomerase family. In terms of assembly, homodimer.

It catalyses the reaction aldehydo-D-ribose 5-phosphate = D-ribulose 5-phosphate. It functions in the pathway carbohydrate degradation; pentose phosphate pathway; D-ribose 5-phosphate from D-ribulose 5-phosphate (non-oxidative stage): step 1/1. Catalyzes the reversible conversion of ribose-5-phosphate to ribulose 5-phosphate. The chain is Ribose-5-phosphate isomerase A from Shewanella putrefaciens (strain CN-32 / ATCC BAA-453).